We begin with the raw amino-acid sequence, 159 residues long: Transcription elongation factor GreA (159 aa).

Residues 14–76 (IKKLENELEY…QLENMLKNAS (63 aa)) adopt a coiled-coil conformation.

Belongs to the GreA/GreB family.

Its function is as follows. Necessary for efficient RNA polymerase transcription elongation past template-encoded arresting sites. The arresting sites in DNA have the property of trapping a certain fraction of elongating RNA polymerases that pass through, resulting in locked ternary complexes. Cleavage of the nascent transcript by cleavage factors such as GreA or GreB allows the resumption of elongation from the new 3'terminus. GreA releases sequences of 2 to 3 nucleotides. The polypeptide is Transcription elongation factor GreA (Clostridium kluyveri (strain NBRC 12016)).